A 395-amino-acid chain; its full sequence is Altered inheritance of mitochondria protein 39, mitochondrial (395 aa).

Residues 161 to 181 (IFGGIFGVIIGYSLIYKVIYL) form a helical membrane-spanning segment.

The protein belongs to the AIM39 family.

The protein localises to the mitochondrion membrane. This is Altered inheritance of mitochondria protein 39, mitochondrial (AIM39) from Saccharomyces cerevisiae (strain YJM789) (Baker's yeast).